Here is a 404-residue protein sequence, read N- to C-terminus: Acyl-[acyl-carrier-protein] desaturase 7, chloroplastic (404 aa).

The transit peptide at 1 to 39 (MAASATTSTLAVTMFGYPNRNCHLKPPATATLRFWRSAA) directs the protein to the chloroplast. 6 residues coordinate Fe cation: E138, E176, H179, E229, E262, and H265.

The protein belongs to the fatty acid desaturase type 2 family. Homodimer. It depends on Fe(2+) as a cofactor.

It is found in the plastid. The protein localises to the chloroplast. It functions in the pathway lipid metabolism; fatty acid metabolism. In terms of biological role, introduces a cis double bond in the acyl chain of an acyl-[acyl-carrier protein]. This chain is Acyl-[acyl-carrier-protein] desaturase 7, chloroplastic, found in Oryza sativa subsp. indica (Rice).